Reading from the N-terminus, the 154-residue chain is Calmodulin-like protein 4 (154 aa).

4 consecutive EF-hand domains span residues 7 to 42 (EQMV…LGLE), 43 to 78 (PTDQ…KMKD), 80 to 115 (DGDE…LGEK), and 116 to 151 (MTDE…AERK). Asp-20, Asn-22, Asp-24, Cys-26, Glu-31, Asp-56, Asp-58, Asn-60, Glu-67, Asp-93, Asp-95, Asn-97, and Glu-104 together coordinate Ca(2+). An N6,N6,N6-trimethyllysine modification is found at Lys-115. Residues Asp-129, Asp-131, Asp-133, Gln-135, and Glu-140 each coordinate Ca(2+).

This sequence belongs to the calmodulin family.

Potential calcium sensor. The chain is Calmodulin-like protein 4 (CML4) from Oryza sativa subsp. japonica (Rice).